Here is a 433-residue protein sequence, read N- to C-terminus: UDP-N-acetylglucosamine 1-carboxyvinyltransferase 2 (433 aa).

K23–N24 serves as a coordination point for phosphoenolpyruvate. UDP-N-acetyl-alpha-D-glucosamine is bound at residue R96. C120 serves as the catalytic Proton donor. Position 120 is a 2-(S-cysteinyl)pyruvic acid O-phosphothioketal (C120). UDP-N-acetyl-alpha-D-glucosamine-binding positions include R125 to L129, D308, and V330.

The protein belongs to the EPSP synthase family. MurA subfamily.

Its subcellular location is the cytoplasm. It carries out the reaction phosphoenolpyruvate + UDP-N-acetyl-alpha-D-glucosamine = UDP-N-acetyl-3-O-(1-carboxyvinyl)-alpha-D-glucosamine + phosphate. It functions in the pathway cell wall biogenesis; peptidoglycan biosynthesis. In terms of biological role, cell wall formation. Adds enolpyruvyl to UDP-N-acetylglucosamine. This is UDP-N-acetylglucosamine 1-carboxyvinyltransferase 2 from Enterococcus faecalis (strain ATCC 700802 / V583).